The primary structure comprises 130 residues: Large ribosomal subunit protein bL20 (130 aa).

This sequence belongs to the bacterial ribosomal protein bL20 family.

Binds directly to 23S ribosomal RNA and is necessary for the in vitro assembly process of the 50S ribosomal subunit. It is not involved in the protein synthesizing functions of that subunit. This chain is Large ribosomal subunit protein bL20, found in Clavibacter sepedonicus (Clavibacter michiganensis subsp. sepedonicus).